The sequence spans 490 residues: Tegument protein VP16 (490 aa).

Residues 12-37 are disordered; that stretch reads MDADGASPPPPRPAGGPKNTPAAPPL. Phosphoserine occurs at positions 18, 353, 411, and 452. The segment at 411–490 is transcriptional activation; it reads STAPPTDVSL…DALGIDEYGG (80 aa).

The protein belongs to the herpesviridae tegument protein VP16 protein family. In terms of assembly, interacts with VP22. Interacts with gH (via C-terminus). Interacts with the virion host shutoff protein (vhs). Interacts with VP11/12. Associates with the VP16-induced complex; binding to host HCFC1 activates VP16 for association with the octamer motif-binding host protein POU2F1, to form a multiprotein-DNA complex responsible for activating transcription of the viral immediate early genes.

It is found in the virion tegument. Its subcellular location is the host nucleus. Functionally, transcriptional activator of immediate-early (IE) gene products (alpha genes). Acts as a key activator of lytic infection by initiating the lytic program through the assembly of the transcriptional regulatory VP16-induced complex composed of VP16 and two cellular factors, HCFC1 and POU2F 1. VP16-induced complex represents a regulatory switch: when it is on, it promotes IE-gene expression and thus lytic infection, and when it is off, it limits IE-gene transcription favoring latent infection. May play a role in the aggregation of tegument proteins around nucleocapsids during virus morphogenesis. In Homo sapiens (Human), this protein is Tegument protein VP16.